The following is a 507-amino-acid chain: Maturase K (507 aa).

The protein belongs to the intron maturase 2 family. MatK subfamily.

Its subcellular location is the plastid. The protein resides in the chloroplast. In terms of biological role, usually encoded in the trnK tRNA gene intron. Probably assists in splicing its own and other chloroplast group II introns. The protein is Maturase K of Asimina triloba (Pawpaw).